A 96-amino-acid chain; its full sequence is Nucleoid-associated protein CF0672 (96 aa).

Belongs to the YbaB/EbfC family. In terms of assembly, homodimer.

The protein localises to the cytoplasm. It localises to the nucleoid. Functionally, binds to DNA and alters its conformation. May be involved in regulation of gene expression, nucleoid organization and DNA protection. This chain is Nucleoid-associated protein CF0672, found in Chlamydia felis (strain Fe/C-56) (Chlamydophila felis).